Here is a 292-residue protein sequence, read N- to C-terminus: UDP-3-O-acyl-N-acetylglucosamine deacetylase (292 aa).

Positions 75, 231, and 235 each coordinate Zn(2+). His-258 (proton donor) is an active-site residue.

The protein belongs to the LpxC family. Zn(2+) is required as a cofactor.

It catalyses the reaction a UDP-3-O-[(3R)-3-hydroxyacyl]-N-acetyl-alpha-D-glucosamine + H2O = a UDP-3-O-[(3R)-3-hydroxyacyl]-alpha-D-glucosamine + acetate. It functions in the pathway glycolipid biosynthesis; lipid IV(A) biosynthesis; lipid IV(A) from (3R)-3-hydroxytetradecanoyl-[acyl-carrier-protein] and UDP-N-acetyl-alpha-D-glucosamine: step 2/6. In terms of biological role, catalyzes the hydrolysis of UDP-3-O-myristoyl-N-acetylglucosamine to form UDP-3-O-myristoylglucosamine and acetate, the committed step in lipid A biosynthesis. The chain is UDP-3-O-acyl-N-acetylglucosamine deacetylase from Nautilia profundicola (strain ATCC BAA-1463 / DSM 18972 / AmH).